We begin with the raw amino-acid sequence, 264 residues long: Thiazole synthase (264 aa).

The active-site Schiff-base intermediate with DXP is the K101. Residues G162, 188 to 189, and 210 to 211 contribute to the 1-deoxy-D-xylulose 5-phosphate site; these read AG and NT.

This sequence belongs to the ThiG family. Homotetramer. Forms heterodimers with either ThiH or ThiS.

The protein localises to the cytoplasm. It carries out the reaction [ThiS sulfur-carrier protein]-C-terminal-Gly-aminoethanethioate + 2-iminoacetate + 1-deoxy-D-xylulose 5-phosphate = [ThiS sulfur-carrier protein]-C-terminal Gly-Gly + 2-[(2R,5Z)-2-carboxy-4-methylthiazol-5(2H)-ylidene]ethyl phosphate + 2 H2O + H(+). It participates in cofactor biosynthesis; thiamine diphosphate biosynthesis. Catalyzes the rearrangement of 1-deoxy-D-xylulose 5-phosphate (DXP) to produce the thiazole phosphate moiety of thiamine. Sulfur is provided by the thiocarboxylate moiety of the carrier protein ThiS. In vitro, sulfur can be provided by H(2)S. The chain is Thiazole synthase from Chromobacterium violaceum (strain ATCC 12472 / DSM 30191 / JCM 1249 / CCUG 213 / NBRC 12614 / NCIMB 9131 / NCTC 9757 / MK).